A 434-amino-acid polypeptide reads, in one-letter code: D-amino acid dehydrogenase (434 aa).

3 to 17 lines the FAD pocket; that stretch reads VIILGGGVIGVTSAW.

This sequence belongs to the DadA oxidoreductase family. FAD serves as cofactor.

It carries out the reaction a D-alpha-amino acid + A + H2O = a 2-oxocarboxylate + AH2 + NH4(+). The protein operates within amino-acid degradation; D-alanine degradation; NH(3) and pyruvate from D-alanine: step 1/1. Functionally, oxidative deamination of D-amino acids. The polypeptide is D-amino acid dehydrogenase (Proteus mirabilis (strain HI4320)).